Consider the following 358-residue polypeptide: GTPase Obg (358 aa).

The Obg domain occupies 1–159 (MKFVDEVTIR…RNLHLELRLL (159 aa)). Positions 160-334 (ADVGLLGMPN…LAQDVMNRLE (175 aa)) constitute an OBG-type G domain. GTP-binding positions include 166–173 (GMPNAGKS), 191–195 (FTTLY), 213–216 (DIPG), 284–287 (NKLD), and 315–317 (SAL). S173 and T193 together coordinate Mg(2+). Residues 337-358 (DEEAREAGERARREQRQEEGPE) form a disordered region. Residues 341 to 358 (REAGERARREQRQEEGPE) are compositionally biased toward basic and acidic residues.

This sequence belongs to the TRAFAC class OBG-HflX-like GTPase superfamily. OBG GTPase family. In terms of assembly, monomer. Mg(2+) serves as cofactor.

It is found in the cytoplasm. In terms of biological role, an essential GTPase which binds GTP, GDP and possibly (p)ppGpp with moderate affinity, with high nucleotide exchange rates and a fairly low GTP hydrolysis rate. Plays a role in control of the cell cycle, stress response, ribosome biogenesis and in those bacteria that undergo differentiation, in morphogenesis control. The polypeptide is GTPase Obg (Alkalilimnicola ehrlichii (strain ATCC BAA-1101 / DSM 17681 / MLHE-1)).